Reading from the N-terminus, the 287-residue chain is MAITASMVKELREKTSAGMMDCKKALEECGGEMDKAVDWLRQKGLSKAAKKAGRATSEGLVGCFVSADGKTAGLAELKCETDFVSRNEKFVELAGKLAEQVATKGALDESAQTAINDIIATLGENMGSGRTAQMNVAGEGFIGSYLHSNGKIAVLVEMTCEKAATAAEATFLECAKNVAMQIAASNPAAVSADKVDPALIAREREVYRQKALEEGKPENIVEKIAEGAVKKFFKEACLLEQPYIRDDKTTVAELLKQTSKAVGDNLGVARFVRFQLGEDAAAEEAAE.

Positions 81-84 (TDFV) are involved in Mg(2+) ion dislocation from EF-Tu.

This sequence belongs to the EF-Ts family.

The protein resides in the cytoplasm. Associates with the EF-Tu.GDP complex and induces the exchange of GDP to GTP. It remains bound to the aminoacyl-tRNA.EF-Tu.GTP complex up to the GTP hydrolysis stage on the ribosome. The chain is Elongation factor Ts from Nitratidesulfovibrio vulgaris (strain ATCC 29579 / DSM 644 / CCUG 34227 / NCIMB 8303 / VKM B-1760 / Hildenborough) (Desulfovibrio vulgaris).